Here is a 428-residue protein sequence, read N- to C-terminus: Cytochrome c biogenesis protein CcsB (428 aa).

Transmembrane regions (helical) follow at residues 14–34 (LRFA…GTFI), 72–92 (SIWF…CSFR), and 162–182 (IGPL…AYGS).

Belongs to the Ccs1/CcsB family. As to quaternary structure, may interact with CcsA.

It is found in the cellular thylakoid membrane. In terms of biological role, required during biogenesis of c-type cytochromes (cytochrome c6 and cytochrome f) at the step of heme attachment. The polypeptide is Cytochrome c biogenesis protein CcsB (Prochlorococcus marinus (strain MIT 9312)).